Reading from the N-terminus, the 194-residue chain is Protein GrpE (194 aa).

A compositionally biased stretch (basic and acidic residues) spans Met1 to Pro12. The disordered stretch occupies residues Met1–Val44.

It belongs to the GrpE family. Homodimer.

The protein localises to the cytoplasm. Its function is as follows. Participates actively in the response to hyperosmotic and heat shock by preventing the aggregation of stress-denatured proteins, in association with DnaK and GrpE. It is the nucleotide exchange factor for DnaK and may function as a thermosensor. Unfolded proteins bind initially to DnaJ; upon interaction with the DnaJ-bound protein, DnaK hydrolyzes its bound ATP, resulting in the formation of a stable complex. GrpE releases ADP from DnaK; ATP binding to DnaK triggers the release of the substrate protein, thus completing the reaction cycle. Several rounds of ATP-dependent interactions between DnaJ, DnaK and GrpE are required for fully efficient folding. The sequence is that of Protein GrpE from Porphyromonas gingivalis (strain ATCC BAA-308 / W83).